The sequence spans 110 residues: Iron-sulfur cluster assembly protein CyaY (110 aa).

This sequence belongs to the frataxin family.

Involved in iron-sulfur (Fe-S) cluster assembly. May act as a regulator of Fe-S biogenesis. The sequence is that of Iron-sulfur cluster assembly protein CyaY from Pseudomonas putida (strain ATCC 700007 / DSM 6899 / JCM 31910 / BCRC 17059 / LMG 24140 / F1).